A 602-amino-acid chain; its full sequence is Aspartate--tRNA(Asp/Asn) ligase (602 aa).

An L-aspartate-binding site is contributed by Glu-175. Positions 199 to 202 (QIFK) are aspartate. Arg-221 serves as a coordination point for L-aspartate. Residues 221–223 (RDE) and Gln-230 each bind ATP. An L-aspartate-binding site is contributed by His-458. Glu-492 contacts ATP. An L-aspartate-binding site is contributed by Arg-499. Residue 544-547 (GLDR) coordinates ATP.

The protein belongs to the class-II aminoacyl-tRNA synthetase family. Type 1 subfamily. As to quaternary structure, homodimer.

The protein resides in the cytoplasm. It carries out the reaction tRNA(Asx) + L-aspartate + ATP = L-aspartyl-tRNA(Asx) + AMP + diphosphate. Functionally, aspartyl-tRNA synthetase with relaxed tRNA specificity since it is able to aspartylate not only its cognate tRNA(Asp) but also tRNA(Asn). Reaction proceeds in two steps: L-aspartate is first activated by ATP to form Asp-AMP and then transferred to the acceptor end of tRNA(Asp/Asn). This Cupriavidus necator (strain ATCC 17699 / DSM 428 / KCTC 22496 / NCIMB 10442 / H16 / Stanier 337) (Ralstonia eutropha) protein is Aspartate--tRNA(Asp/Asn) ligase.